The following is a 149-amino-acid chain: Putative pre-16S rRNA nuclease (149 aa).

Belongs to the YqgF nuclease family.

It is found in the cytoplasm. Its function is as follows. Could be a nuclease involved in processing of the 5'-end of pre-16S rRNA. The protein is Putative pre-16S rRNA nuclease of Burkholderia ambifaria (strain MC40-6).